The sequence spans 166 residues: SsrA-binding protein (166 aa).

The segment at 143-166 (HDKREDDKRKQANRDMKSALARYR) is disordered. Over residues 144–159 (DKREDDKRKQANRDMK) the composition is skewed to basic and acidic residues.

This sequence belongs to the SmpB family.

Its subcellular location is the cytoplasm. Required for rescue of stalled ribosomes mediated by trans-translation. Binds to transfer-messenger RNA (tmRNA), required for stable association of tmRNA with ribosomes. tmRNA and SmpB together mimic tRNA shape, replacing the anticodon stem-loop with SmpB. tmRNA is encoded by the ssrA gene; the 2 termini fold to resemble tRNA(Ala) and it encodes a 'tag peptide', a short internal open reading frame. During trans-translation Ala-aminoacylated tmRNA acts like a tRNA, entering the A-site of stalled ribosomes, displacing the stalled mRNA. The ribosome then switches to translate the ORF on the tmRNA; the nascent peptide is terminated with the 'tag peptide' encoded by the tmRNA and targeted for degradation. The ribosome is freed to recommence translation, which seems to be the essential function of trans-translation. This Prochlorococcus marinus (strain MIT 9211) protein is SsrA-binding protein.